Here is a 935-residue protein sequence, read N- to C-terminus: Progesterone receptor (935 aa).

The AF3; mediates transcriptional activation stretch occupies residues 1 to 164 (MTELKAKGPR…PATQGVLSPL (164 aa)). The interval 1-254 (MTELKAKGPR…GGAAAGGGAA (254 aa)) is disordered. The interval 1-568 (MTELKAKGPR…YSFESLPQKI (568 aa)) is modulating, Pro-Rich. Ser-20 is modified (phosphoserine). Residues 55–59 (LDGLL) carry the LXXL motif 1 motif. Phosphoserine is present on Ser-81. The LXXL motif 2 motif lies at 115–119 (LDTLL). Phosphoserine is present on residues Ser-130 and Ser-162. Residues 165–305 (MSRSGGKAGD…LATTVMDFIH (141 aa)) are mediates transcriptional transrepression. The Nuclear localization signal signature appears at 183–187 (KVLPR). 2 positions are modified to phosphoserine: Ser-190 and Ser-213. Over residues 220–231 (EVEEEDGSESED) the composition is skewed to acidic residues. Residues 232–246 (SAGPLLKGKPRALGG) show a composition bias toward low complexity. The residue at position 294 (Ser-294) is a Phosphoserine; by MAPK1. The disordered stretch occupies residues 331–378 (GGAGAASAFAPPRSSPSASSTPVAVGDFPDCAYPPDAEPKDDAYPLYS). The span at 335–350 (AASAFAPPRSSPSASS) shows a compositional bias: low complexity. Ser-345 carries the post-translational modification Phosphoserine; by MAPK. Lys-388 is covalently cross-linked (Glycyl lysine isopeptide (Lys-Gly) (interchain with G-Cter in SUMO); alternate). Residue Lys-388 forms a Glycyl lysine isopeptide (Lys-Gly) (interchain with G-Cter in ubiquitin); alternate linkage. Ser-400 is modified (phosphoserine; by CDK2). Residues 418 to 430 (PLGPPPPLPPRAP) are compositionally biased toward pro residues. The interval 418–438 (PLGPPPPLPPRAPPTRAGEAA) is disordered. An AF1; mediates transcriptional activation region spans residues 456 to 548 (STLECILYKA…VYPPYLNYLR (93 aa)). Lys-533 is covalently cross-linked (Glycyl lysine isopeptide (Lys-Gly) (interchain with G-Cter in SUMO)). NR C4-type zinc fingers lie at residues 569 to 589 (CLIC…CGSC) and 605 to 629 (CAGR…LRKC). Residues 569–641 (CLICGDEASG…AGMVLGGRKF (73 aa)) constitute a DNA-binding region (nuclear receptor). A Phosphoserine modification is found at Ser-678. One can recognise an NR LBD domain in the interval 681 to 915 (QDIQLIPPLI…EFPEMMSEVI (235 aa)). Residues 689–935 (LINLLMSIEP…MVKPLLFHKK (247 aa)) form an AF2; mediates transcriptional activation region.

It belongs to the nuclear hormone receptor family. Interacts with SMARD1 and UNC45A. Interacts with CUEDC2; the interaction promotes ubiquitination, decreases sumoylation, and represses transcriptional activity. Interacts with PIAS3; the interaction promotes sumoylation of PR in a hormone-dependent manner, inhibits DNA-binding, and alters nuclear export. Interacts with SP1; the interaction requires ligand-induced phosphorylation on Ser-345 by ERK1/2-MAPK. Interacts with PRMT2. Interacts with NCOA2 and NCOA1. Interacts with KLF9. Interacts with GTF2B. Post-translationally, phosphorylated on multiple serine sites. Several of these sites are hormone-dependent. Phosphorylation on Ser-294 is highly hormone-dependent and modulates ubiquitination and sumoylation on Lys-388. Phosphorylation on Ser-102 and Ser-345 also requires induction by hormone. Basal phosphorylation on Ser-81, Ser-162, Ser-190 and Ser-400 is increased in response to progesterone and can be phosphorylated in vitro by the CDK2-A1 complex. Increased levels of phosphorylation on Ser-400 also in the presence of EGF, heregulin, IGF, PMA and FBS. Phosphorylation at this site by CDK2 is ligand-independent, and increases nuclear translocation and transcriptional activity. Phosphorylation at Ser-162 and Ser-294, but not at Ser-190, is impaired during the G(2)/M phase of the cell cycle. Phosphorylation on Ser-345 by ERK1/2 MAPK is required for interaction with SP1. In terms of processing, sumoylation is hormone-dependent and represses transcriptional activity. Sumoylation on all three sites is enhanced by PIAS3. Desumoylated by SENP1. Sumoylation on Lys-388, the main site of sumoylation, is repressed by ubiquitination on the same site, and modulated by phosphorylation at Ser-294. Ubiquitination is hormone-dependent and represses sumoylation on the same site. Promoted by MAPK-mediated phosphorylation on Ser-294. Post-translationally, palmitoylated by ZDHHC7 and ZDHHC21. Palmitoylation is required for plasma membrane targeting and for rapid intracellular signaling via ERK and AKT kinases and cAMP generation.

It localises to the nucleus. Its subcellular location is the cytoplasm. The steroid hormones and their receptors are involved in the regulation of eukaryotic gene expression and affect cellular proliferation and differentiation in target tissues. Transcriptional activator of several progesteron-dependent promoters in a variety of cell types. Involved in activation of SRC-dependent MAPK signaling on hormone stimulation. This chain is Progesterone receptor (PGR), found in Pongo pygmaeus (Bornean orangutan).